A 67-amino-acid chain; its full sequence is uncharacterized protein (67 aa).

This is an uncharacterized protein from Dictyostelium discoideum (Social amoeba).